Here is a 340-residue protein sequence, read N- to C-terminus: Serpentine receptor class alpha-23 (340 aa).

The next 6 helical transmembrane spans lie at 34-54, 114-136, 150-170, 199-219, 250-270, and 284-304; these read FIST…QALW, YFYY…DRLI, FIAI…FYIA, VRTV…YLSV, ILIV…NLLL, and VGAF…AIYF.

It belongs to the nematode receptor-like protein sra family.

It localises to the membrane. This chain is Serpentine receptor class alpha-23 (sra-23), found in Caenorhabditis elegans.